We begin with the raw amino-acid sequence, 1872 residues long: Plexin-A3 (1872 aa).

Residues 1–19 (MHTVCLLPLLFFTIGGCLG) form the signal peptide. Residues 20 to 489 (SSRPFRTFVV…SEKQVSQLPV (470 aa)) enclose the Sema domain. Residues 20–1220 (SSRPFRTFVV…ITADRALTLP (1201 aa)) are Extracellular-facing. N60 carries N-linked (GlcNAc...) asparagine glycosylation. 9 disulfide bridges follow: C78/C87, C113/C121, C267/C388, C283/C339, C357/C376, C492/C509, C498/C540, C501/C518, and C512/C524. N549 carries an N-linked (GlcNAc...) asparagine glycan. C575 and C595 are disulfide-bonded. 4 consecutive IPT/TIG domains span residues 841-934 (PRIT…YSFV), 936-1021 (PTLD…YTYT), 1024-1123 (PTVT…FTYY), and 1126-1212 (PSFE…LHIT). N-linked (GlcNAc...) asparagine glycosylation occurs at N1163. A helical membrane pass occupies residues 1221–1241 (AMVGLAAGGGLLLLAITVVLV). Positions 1240-1294 (LVAYKRKTQDADRTLKRLQLQMDNLESRVALECKEAFAELQTDINELTNHMDGVQ) form a coiled coil. Topologically, residues 1242–1872 (AYKRKTQDAD…QIITLVSSSS (631 aa)) are cytoplasmic. A Phosphoserine modification is found at S1597.

It belongs to the plexin family.

The protein localises to the cell membrane. Its function is as follows. Coreceptor for SEMA3A and SEMA3F. Necessary for signaling by class 3 semaphorins and subsequent remodeling of the cytoskeleton. Plays a role in axon guidance in the developing nervous system. Regulates the migration of sympathetic neurons, but not of neural crest precursors. Required for normal dendrite spine morphology in pyramidal neurons. May play a role in regulating semaphorin-mediated programmed cell death in the developing nervous system. Class 3 semaphorins bind to a complex composed of a neuropilin and a plexin. The plexin modulates the affinity of the complex for specific semaphorins, and its cytoplasmic domain is required for the activation of down-stream signaling events in the cytoplasm. This is Plexin-A3 (Plxna3) from Rattus norvegicus (Rat).